We begin with the raw amino-acid sequence, 300 residues long: MAKLSLFRGCIVPNRYPGIEKATKLCLQKLEVDAVDLPGASCCPAPGVFKSFDKATWLALASRNIVLSERMGRDILTVCNGCYGSLADANIELKNDPEMKACTNSCLKEIGMEYKGTAEVRHIIEFLYKELGPEKLKSFITTPLDLKVALHYGCHLIKPSKERNLGETEAPVFFDELVEATGAKSVDYTDKMMCCGAGGGVRSGHAAESLEMLEHKLACIRNAGVDCIVNACPFCHLQFDRGQLAVNEKFGTDYSIPVLHYSQLLGLALGFSPDELGIEQNAIQNIEFLAKIYEISAGLR.

This sequence belongs to the HdrB family. In terms of assembly, the ferredoxin/F(420)H(2)-dependent CoB-CoM heterodisulfide reductase is composed of three subunits; HdrA2, HdrB2 and HdrC2. [4Fe-4S] cluster is required as a cofactor.

It is found in the cytoplasm. It carries out the reaction coenzyme B + coenzyme M + 2 oxidized [2Fe-2S]-[ferredoxin] = coenzyme M-coenzyme B heterodisulfide + 2 reduced [2Fe-2S]-[ferredoxin] + 2 H(+). The catalysed reaction is coenzyme B + 2 oxidized coenzyme F420-(gamma-L-Glu)(n) + coenzyme M + 2 reduced [2Fe-2S]-[ferredoxin] + 4 H(+) = coenzyme M-coenzyme B heterodisulfide + 2 reduced coenzyme F420-(gamma-L-Glu)(n) + 2 oxidized [2Fe-2S]-[ferredoxin]. The protein operates within cofactor metabolism; coenzyme M-coenzyme B heterodisulfide reduction; coenzyme B and coenzyme M from coenzyme M-coenzyme B heterodisulfide: step 1/1. In terms of biological role, part of a complex that catalyzes the reversible reduction of CoM-S-S-CoB to the thiol-coenzymes H-S-CoM (coenzyme M) and H-S-CoB (coenzyme B). Catalyzes the transfer of electrons from ferredoxin to CoM-S-S-CoB during methanogenesis from acetate. Electrons transfer from ferredoxin to CoM-S-S-CoB via HdrA2, HdrC2 and HdrB2. In addition, the complex can use electron bifurcation to direct electron pairs from reduced coenzyme F420 towards the reduction of both ferredoxin and CoB-CoM heterodisulfide. This activity may take place during Fe(III)-dependent anaerobic methane oxidation. This is Ferredoxin/F(420)H(2)-dependent CoB-CoM heterodisulfide reductase subunit B from Methanosarcina acetivorans (strain ATCC 35395 / DSM 2834 / JCM 12185 / C2A).